The primary structure comprises 59 residues: ATP synthase protein 8 (59 aa).

Residues 7–23 (LSPPFLYFELIGHFQVE) form a helical membrane-spanning segment.

This sequence belongs to the ATPase protein 8 family. In terms of assembly, F-type ATPases have 2 components, CF(1) - the catalytic core - and CF(0) - the membrane proton channel.

It is found in the mitochondrion membrane. In terms of biological role, mitochondrial membrane ATP synthase (F(1)F(0) ATP synthase or Complex V) produces ATP from ADP in the presence of a proton gradient across the membrane which is generated by electron transport complexes of the respiratory chain. F-type ATPases consist of two structural domains, F(1) - containing the extramembraneous catalytic core and F(0) - containing the membrane proton channel, linked together by a central stalk and a peripheral stalk. During catalysis, ATP synthesis in the catalytic domain of F(1) is coupled via a rotary mechanism of the central stalk subunits to proton translocation. Part of the complex F(0) domain. Minor subunit located with subunit a in the membrane. This is ATP synthase protein 8 (MT-ATP8) from Oenothera berteroana (Bertero's evening primrose).